A 180-amino-acid polypeptide reads, in one-letter code: Probable nicotinate-nucleotide adenylyltransferase (180 aa).

It belongs to the NadD family.

It catalyses the reaction nicotinate beta-D-ribonucleotide + ATP + H(+) = deamido-NAD(+) + diphosphate. Its pathway is cofactor biosynthesis; NAD(+) biosynthesis; deamido-NAD(+) from nicotinate D-ribonucleotide: step 1/1. Catalyzes the reversible adenylation of nicotinate mononucleotide (NaMN) to nicotinic acid adenine dinucleotide (NaAD). The chain is Probable nicotinate-nucleotide adenylyltransferase from Pelagibacter ubique (strain HTCC1062).